The sequence spans 566 residues: APC/C activator protein CDH1 (566 aa).

Positions 1-18 (MSTNLNPFMNNTPSSSPL) are enriched in polar residues. The segment at 1-56 (MSTNLNPFMNNTPSSSPLKGSESKRVSKRPISSSSSASLLSSPSRRSRPSTVYGDR) is disordered. A compositionally biased stretch (low complexity) spans 29-44 (RPISSSSSASLLSSPS). Positions 55–61 (DRYIPSR) match the C-box motif. Position 213 is a phosphoserine (serine 213). WD repeat units follow at residues 258 to 298 (PSLA…VVHL), 300 to 339 (DTENEYTSLSWIGAGSHLAVGQANGLVEIYDVMKRKCIRT), 342 to 379 (GHIDRVACLSWNNHVLTSGSRDHRILHRDVRMPDPFFE), 383 to 422 (SHTQEVCGLKWNVADNKLASGGNDNVVHVYEGTSKSPILT), 425 to 467 (EHKA…KMSD), 469 to 510 (DSGS…PIAI), and 513 to 552 (GHSFRVLHLTLSNDGTTVVSGAGDETLRYWKLFDKPKAKV).

The protein belongs to the WD repeat CDC20/Fizzy family. As to quaternary structure, associates with the APC/C complex. Interacts with CLB2, CLB3, CDC5, HSL1, MSN5 and PSE1. In terms of processing, phosphorylated at multiple sites by CDC28, probably in its CLB5 bound form, in S, G2 and M phase of the cell cycle, thereby blocking the association of CDH1 to the APC/C and promoting nuclear export of CDH1 by MSN5. Dephosphorylated and activated by CDC14 in late anaphase, which may be necessary for PSE1-dependent nuclear localization.

The protein localises to the cytoplasm. The protein resides in the nucleus. Its function is as follows. Activator protein that regulates the ubiquitin ligase activity and substrate specificity of the anaphase promoting complex/cyclosome (APC/C). During telophase and in the subsequent G1 phase of the cell cycle, recognizes and binds proteins containing a destruction box (D-box) and an additional degradation signal termed the KEN box including ASE1, CDC20, the B-type cyclins CLB2 and CLB3, the polo-like kinase CDC5 and HSL1, and recruits them in a C-box-dependent manner to the APC/C for ubiquitination and subsequent proteolysis. Required for exit from mitosis, cytokinesis and formation of prereplicative complexes in G1. Probably is the target of a BUB2-dependent spindle checkpoint pathway. This is APC/C activator protein CDH1 (CDH1) from Saccharomyces cerevisiae (strain ATCC 204508 / S288c) (Baker's yeast).